The sequence spans 390 residues: uncharacterized protein (390 aa).

Belongs to the glycosyltransferase group 1 family. Glycosyltransferase 4 subfamily.

This is an uncharacterized protein from Methanocaldococcus jannaschii (strain ATCC 43067 / DSM 2661 / JAL-1 / JCM 10045 / NBRC 100440) (Methanococcus jannaschii).